The following is a 285-amino-acid chain: Protease HtpX homolog (285 aa).

The next 2 helical transmembrane spans lie at 7–27 (TAML…MIGG) and 30–50 (GMTI…WFSD). His-131 contacts Zn(2+). The active site involves Glu-132. His-135 lines the Zn(2+) pocket. Helical transmembrane passes span 146–166 (ISAT…FFGG) and 177–197 (IAGI…QMAI). Position 202 (Glu-202) interacts with Zn(2+).

It belongs to the peptidase M48B family. Zn(2+) is required as a cofactor.

The protein resides in the cell inner membrane. In Burkholderia mallei (strain NCTC 10247), this protein is Protease HtpX homolog.